We begin with the raw amino-acid sequence, 284 residues long: Phosphatidylglycerol--prolipoprotein diacylglyceryl transferase (284 aa).

Helical transmembrane passes span 21–41, 62–82, 106–126, 136–156, 190–210, 218–238, and 252–272; these read IEVH…FYMA, YFLW…ILIY, FVGI…IASY, LLIY…FGRI, PSQL…VMWA, GLLI…AEFY, and LSMG…ILLY. A 1,2-diacyl-sn-glycero-3-phospho-(1'-sn-glycerol) is bound at residue Arg-155.

It belongs to the Lgt family.

Its subcellular location is the cell inner membrane. The catalysed reaction is L-cysteinyl-[prolipoprotein] + a 1,2-diacyl-sn-glycero-3-phospho-(1'-sn-glycerol) = an S-1,2-diacyl-sn-glyceryl-L-cysteinyl-[prolipoprotein] + sn-glycerol 1-phosphate + H(+). The protein operates within protein modification; lipoprotein biosynthesis (diacylglyceryl transfer). Its function is as follows. Catalyzes the transfer of the diacylglyceryl group from phosphatidylglycerol to the sulfhydryl group of the N-terminal cysteine of a prolipoprotein, the first step in the formation of mature lipoproteins. This Helicobacter pylori (strain P12) protein is Phosphatidylglycerol--prolipoprotein diacylglyceryl transferase.